We begin with the raw amino-acid sequence, 308 residues long: Protein translocase subunit SecF (308 aa).

A run of 6 helical transmembrane segments spans residues 22 to 42, 140 to 160, 164 to 184, 194 to 214, 246 to 266, and 272 to 292; these read AVSY…IGIY, IEAG…YIWV, WYFG…ALGF, LSTI…SVVI, ILTV…GGEA, and VLVF…SAPI.

Belongs to the SecD/SecF family. SecF subfamily. As to quaternary structure, forms a complex with SecD. Part of the essential Sec protein translocation apparatus which comprises SecA, SecYEG and auxiliary proteins SecDF-YajC and YidC.

It is found in the cell inner membrane. Part of the Sec protein translocase complex. Interacts with the SecYEG preprotein conducting channel. SecDF uses the proton motive force (PMF) to complete protein translocation after the ATP-dependent function of SecA. The sequence is that of Protein translocase subunit SecF from Rickettsia akari (strain Hartford).